The primary structure comprises 931 residues: Probable ubiquitin-like-specific protease 2B (931 aa).

Residues 204-224 are disordered; the sequence is SLSDRSALSEASDSEDDEEDW. The segment covering 215–224 has biased composition (acidic residues); that stretch reads SDSEDDEEDW. Active-site residues include H489, D522, and C577. The interval 825–931 is disordered; sequence HEEEIDESPP…PTGEAEEMEK (107 aa). Residues 839-851 are compositionally biased toward polar residues; the sequence is SLKSATVGSNTAD. A compositionally biased stretch (basic and acidic residues) spans 873–904; the sequence is NDRDEEKPLEHDLEIGDKTSEDVGDDCDQKEP.

It belongs to the peptidase C48 family.

In terms of biological role, protease that catalyzes two essential functions in the SUMO pathway: processing of full-length SUMOs to their mature forms and deconjugation of SUMO from targeted proteins. The chain is Probable ubiquitin-like-specific protease 2B (ULP2B) from Arabidopsis thaliana (Mouse-ear cress).